A 174-amino-acid polypeptide reads, in one-letter code: NADH-quinone oxidoreductase subunit B 2 (174 aa).

4 residues coordinate [4Fe-4S] cluster: Cys51, Cys52, Cys116, and Cys145.

This sequence belongs to the complex I 20 kDa subunit family. As to quaternary structure, NDH-1 is composed of 14 different subunits. Subunits NuoB, C, D, E, F, and G constitute the peripheral sector of the complex. [4Fe-4S] cluster serves as cofactor.

It is found in the cell inner membrane. The enzyme catalyses a quinone + NADH + 5 H(+)(in) = a quinol + NAD(+) + 4 H(+)(out). Functionally, NDH-1 shuttles electrons from NADH, via FMN and iron-sulfur (Fe-S) centers, to quinones in the respiratory chain. The immediate electron acceptor for the enzyme in this species is believed to be ubiquinone. Couples the redox reaction to proton translocation (for every two electrons transferred, four hydrogen ions are translocated across the cytoplasmic membrane), and thus conserves the redox energy in a proton gradient. In Thermodesulfovibrio yellowstonii (strain ATCC 51303 / DSM 11347 / YP87), this protein is NADH-quinone oxidoreductase subunit B 2.